The following is a 192-amino-acid chain: Fe/S biogenesis protein NfuA (192 aa).

[4Fe-4S] cluster is bound by residues C149 and C152.

Belongs to the NfuA family. In terms of assembly, homodimer. [4Fe-4S] cluster is required as a cofactor.

In terms of biological role, involved in iron-sulfur cluster biogenesis. Binds a 4Fe-4S cluster, can transfer this cluster to apoproteins, and thereby intervenes in the maturation of Fe/S proteins. Could also act as a scaffold/chaperone for damaged Fe/S proteins. This is Fe/S biogenesis protein NfuA from Shewanella pealeana (strain ATCC 700345 / ANG-SQ1).